The chain runs to 209 residues: Kynurenine formamidase (209 aa).

F18 provides a ligand contact to substrate. Zn(2+)-binding residues include H48, H52, and D54. Residue H58 is the Proton donor/acceptor of the active site. Zn(2+) contacts are provided by H160 and E172.

The protein belongs to the Cyclase 1 superfamily. KynB family. As to quaternary structure, homodimer. It depends on Zn(2+) as a cofactor.

It catalyses the reaction N-formyl-L-kynurenine + H2O = L-kynurenine + formate + H(+). The protein operates within amino-acid degradation; L-tryptophan degradation via kynurenine pathway; L-kynurenine from L-tryptophan: step 2/2. In terms of biological role, catalyzes the hydrolysis of N-formyl-L-kynurenine to L-kynurenine, the second step in the kynurenine pathway of tryptophan degradation. This is Kynurenine formamidase from Bordetella bronchiseptica (strain ATCC BAA-588 / NCTC 13252 / RB50) (Alcaligenes bronchisepticus).